A 565-amino-acid polypeptide reads, in one-letter code: MARPKNVKHIFVTGGVISSLGKGILSASLGMLLKSRGLKVAIQKYDPYINVDPGTMSPYQHGEVYVTDDGAETDLDLGHYERFLDEATSQASNLTMGRVYKSVIDKERSGEYLGGTVQVVPHVIDEIKDRMAELAKNGNLDVLITEIGGTIGDIESLPFLEAMRQMKLEMGERNLLNIHLTFVPYIKAACELKTKPTQHSVKMLLETGIQPDILVCRSEKPLSREIKNKVGHFCNVNELDVIGLNDCDTIYEVPLMLLKEKLDLRVMKKLGLKKFREPNLEYWRDFCNKVLHPTEGEVTIGVCGKYTEYPDAYKSILEAFIHAGASNNVRVTIKLLRAEDAEAGSFDFKKEMQGVSGVLVAPGFGDRGIEGKISFIRYAREQNIPFFGICLGMQCATIEFARNVCGLHDANSTEFNKRTRFPVIDLMEQQKKVKEKGGTMRLGSYPCIIKEGSKAYDIYKKFLINERHRHRFEFNNTYRSALEEQGMVFSGTSPNGELVEIIELKDHRWFVGVQFHPELKSRVQQVHPLFHGFVAAAKEYEKGSRQMELTVDMPSFMPVENEPAQ.

Residues 1–272 (MARPKNVKHI…DLRVMKKLGL (272 aa)) form an amidoligase domain region. A CTP-binding site is contributed by serine 18. Serine 18 contacts UTP. 19–24 (SLGKGI) lines the ATP pocket. Position 59 (tyrosine 59) interacts with L-glutamine. Aspartate 76 serves as a coordination point for ATP. Residues aspartate 76 and glutamate 146 each contribute to the Mg(2+) site. Residues 153 to 155 (DIE), 193 to 198 (KTKPTQ), and lysine 229 contribute to the CTP site. UTP-binding positions include 193-198 (KTKPTQ) and lysine 229. A Glutamine amidotransferase type-1 domain is found at 299 to 543 (TIGVCGKYTE…VAAAKEYEKG (245 aa)). Glycine 363 lines the L-glutamine pocket. Residue cysteine 390 is the Nucleophile; for glutamine hydrolysis of the active site. L-glutamine-binding positions include 391–394 (LGMQ), glutamate 414, and arginine 471. Catalysis depends on residues histidine 516 and glutamate 518.

The protein belongs to the CTP synthase family. In terms of assembly, homotetramer.

The enzyme catalyses UTP + L-glutamine + ATP + H2O = CTP + L-glutamate + ADP + phosphate + 2 H(+). The catalysed reaction is L-glutamine + H2O = L-glutamate + NH4(+). It catalyses the reaction UTP + NH4(+) + ATP = CTP + ADP + phosphate + 2 H(+). It functions in the pathway pyrimidine metabolism; CTP biosynthesis via de novo pathway; CTP from UDP: step 2/2. Its activity is regulated as follows. Allosterically activated by GTP, when glutamine is the substrate; GTP has no effect on the reaction when ammonia is the substrate. The allosteric effector GTP functions by stabilizing the protein conformation that binds the tetrahedral intermediate(s) formed during glutamine hydrolysis. Inhibited by the product CTP, via allosteric rather than competitive inhibition. In terms of biological role, catalyzes the ATP-dependent amination of UTP to CTP with either L-glutamine or ammonia as the source of nitrogen. Regulates intracellular CTP levels through interactions with the four ribonucleotide triphosphates. This is CTP synthase from Chlorobium phaeobacteroides (strain DSM 266 / SMG 266 / 2430).